The following is a 418-amino-acid chain: Actin-related protein 3 (418 aa).

A2 is subject to N-acetylalanine. 4 positions are modified to N6-acetyllysine: K240, K244, K251, and K254.

The protein belongs to the actin family. ARP3 subfamily. As to quaternary structure, component of the Arp2/3 complex composed of ACTR2/ARP2, ACTR3/ARP3, ARPC1B/p41-ARC, ARPC2/p34-ARC, ARPC3/p21-ARC, ARPC4/p20-ARC and ARPC5/p16-ARC. Interacts with WHDC1. Interacts weakly with MEFV. Interacts with AVIL. (Microbial infection) Interacts with bacterium B.thailandensis BimA.

The protein resides in the cytoplasm. Its subcellular location is the cytoskeleton. It is found in the cell projection. The protein localises to the nucleus. Functionally, ATP-binding component of the Arp2/3 complex, a multiprotein complex that mediates actin polymerization upon stimulation by nucleation-promoting factor (NPF). The Arp2/3 complex mediates the formation of branched actin networks in the cytoplasm, providing the force for cell motility. Seems to contact the pointed end of the daughter actin filament. In podocytes, required for the formation of lamellipodia downstream of AVIL and PLCE1 regulation. In addition to its role in the cytoplasmic cytoskeleton, the Arp2/3 complex also promotes actin polymerization in the nucleus, thereby regulating gene transcription and repair of damaged DNA. The Arp2/3 complex promotes homologous recombination (HR) repair in response to DNA damage by promoting nuclear actin polymerization, leading to drive motility of double-strand breaks (DSBs). Plays a role in ciliogenesis. The sequence is that of Actin-related protein 3 (Actr3) from Mus musculus (Mouse).